Here is a 237-residue protein sequence, read N- to C-terminus: Ribosomal RNA small subunit methyltransferase G (237 aa).

S-adenosyl-L-methionine-binding positions include glycine 78, phenylalanine 83, 129–130 (AE), and arginine 148. The disordered stretch occupies residues 218–237 (KKETPNKYPRKAGMPNKRPL).

It belongs to the methyltransferase superfamily. RNA methyltransferase RsmG family.

It is found in the cytoplasm. Its function is as follows. Specifically methylates the N7 position of a guanine in 16S rRNA. In Streptococcus sanguinis (strain SK36), this protein is Ribosomal RNA small subunit methyltransferase G.